The following is a 105-amino-acid chain: MADWDGKYISPYAEHGKKSEQVKKITVSIPIKVLEILTNERTRRQLKSLRHATNSELLCEAFLHAFTGQPLPTDADLMKERNDEIPEDAKVLMRELGVDPESWEY.

This sequence belongs to the MetJ family. Homodimer.

Its subcellular location is the cytoplasm. In terms of biological role, this regulatory protein, when combined with SAM (S-adenosylmethionine) represses the expression of the methionine regulon and of enzymes involved in SAM synthesis. This chain is Met repressor, found in Haemophilus influenzae (strain 86-028NP).